The chain runs to 867 residues: GATOR2 complex protein Mio (867 aa).

5 WD repeats span residues 51–86 (ANES…GICN), 100–144 (RQQR…PKET), 149–188 (GVGE…ATCQ), 190–228 (IQTK…SPLR), and 231–272 (QSSK…TDNS). Positions 350 to 376 (PASPTSTAATPTQQQPTSSCSTNSGSS) are enriched in low complexity. Positions 350–378 (PASPTSTAATPTQQQPTSSCSTNSGSSLD) are disordered. A C4-type zinc finger spans residues 739 to 777 (LSCNFCGKSVSNALLDEPRPRSTTTSTNRLSSCPSCRKP). Residues cysteine 741, cysteine 744, cysteine 771, cysteine 774, cysteine 784, cysteine 821, cysteine 824, histidine 826, histidine 829, histidine 832, cysteine 843, cysteine 848, and cysteine 852 each coordinate Zn(2+). An RING-type; atypical zinc finger spans residues 778-857 (LPRCSLCLMH…CNCRCFDMDG (80 aa)).

The protein belongs to the WD repeat mio family. In terms of assembly, component of the GATOR complex consisting of mio, Nup44A/Seh1, Im11, Nplr3, Nplr2, Wdr24, Wdr59 and Sec13. Within the GATOR complex, probable component of the GATOR2 subcomplex which is likely composed of mio, Nup44A/Seh1, Wdr24, Wdr59 and Sec13. Interacts with Wdr24. Interacts with nucleoporin Nup44A/Seh1. The GATOR2 complex associates with unmet in the absence of S-adenosyl-L-methionine; the mio-Wdr24-Nup44A subcomplex is essential and sufficient for this interaction while Wdr59 and Sec13 are dispensable. This association acts as a nutrient sensor to inhibit mTORC1 signaling in the absence of methionine. In terms of tissue distribution, present in the oocyte.

It localises to the nucleus. It is found in the lysosome. An essential component of the GATOR subcomplex GATOR2 which functions as an activator of the amino acid-sensing branch of the mTORC1 signaling pathway. The two GATOR subcomplexes, GATOR1 and GATOR2, regulate the mTORC1 pathway in order to mediate metabolic homeostasis, female gametogenesis and the response to amino acid limitation and complete starvation. GATOR2 activates the mTORC1 signaling pathway through the inhibition of the GATOR1 subcomplex, controlling the switch to cell proliferation and growth under nutrient replete conditions and during female oocyte development. This component is required for activating mTORC1 specifically in germline cells to promote cell growth and maintain the oocyte fate. GATOR1 and GATOR2 act at different stages of oogenesis to regulate mTORC1 in order to control meiotic entry and promote oocyte growth and development. After exactly four mitotic cyst divisions, the GATOR1 complex members (Iml1, Nprl2 and Nprl3) down-regulate mTORC1 to slow cellular metabolism and promote the mitotic/meiotic transition. At later stages of oogenesis, the mio and Nup44A components of the GATOR2 complex inhibit GATOR1 and thus activate mTORC1 to promote meiotic progression, and drive oocyte growth and development. In addition to its role in the regulation of the mTORC1 complex, functions independently of mTORC1 to prevent the inappropriate accumulation of autolysosomes in germline tissues. The protein is GATOR2 complex protein Mio of Drosophila melanogaster (Fruit fly).